Here is a 1093-residue protein sequence, read N- to C-terminus: Phosphorylase b kinase regulatory subunit beta (1093 aa).

Position 2 is an N-acetylalanine (A2). A4 is modified (phosphoserine). Residues 7–29 (LTAEVSWKVLERRARTKRSGSVY) form a calmodulin-binding region. At S12 the chain carries Phosphoserine; by autocatalysis. A phosphoserine mark is found at S27 and S701. Residues 689 to 716 (EPPKHSKVKRQSSTPSAPELGQQPDVNI) are disordered. 2 calmodulin-binding regions span residues 768 to 795 (RVYR…FSSS) and 920 to 951 (NGRC…ILER). C1090 carries S-farnesyl cysteine lipidation.

It belongs to the phosphorylase b kinase regulatory chain family. In terms of assembly, hexadecamer of 4 heterotetramers, each composed of alpha, beta, gamma, and delta subunits. Alpha (PHKA1 or PHKA2) and beta (PHKB) are regulatory subunits, gamma (PHKG1 or PHKG2) is the catalytic subunit, and delta is calmodulin. Ser-701 is probably phosphorylated by PKA. In terms of processing, although the final Cys may be farnesylated, the terminal tripeptide is probably not removed, and the C-terminus is not methylated.

It localises to the cell membrane. It participates in glycan biosynthesis; glycogen metabolism. By phosphorylation of various serine residues. In terms of biological role, phosphorylase b kinase catalyzes the phosphorylation of serine in certain substrates, including troponin I. The beta chain acts as a regulatory unit and modulates the activity of the holoenzyme in response to phosphorylation. This is Phosphorylase b kinase regulatory subunit beta (PHKB) from Homo sapiens (Human).